We begin with the raw amino-acid sequence, 563 residues long: Serine/threonine-protein kinase WNK8 (563 aa).

The Protein kinase domain maps to 29–286 (IRYDDVLGRG…ALELSKDPFL (258 aa)). ATP contacts are provided by residues 109–112 (TELF) and lysine 159. Residue aspartate 176 is the Proton acceptor of the active site. The segment covering 426-436 (TSSHHNQNSPR) has biased composition (polar residues). Residues 426 to 459 (TSSHHNQNSPRLTHEDHEAANQQTVNSKDEEAAG) form a disordered region. Position 509 is a phosphoserine (serine 509).

It belongs to the protein kinase superfamily. Ser/Thr protein kinase family. WNK subfamily. In terms of assembly, interacts with RGS1 and GB1, but not with GPA1. The association with RGS1 at the plasma membrane is triggered by induction of glucose. Binds to EDM2 in nucleus. Autophosphorylated.

The protein resides in the nucleus. The catalysed reaction is L-seryl-[protein] + ATP = O-phospho-L-seryl-[protein] + ADP + H(+). It catalyses the reaction L-threonyl-[protein] + ATP = O-phospho-L-threonyl-[protein] + ADP + H(+). Functionally, regulates flowering time by modulating the photoperiod pathway. Phosphorylates the vacuolar ATPase subunit C (VATC) and RGS1. Regulates EDM2 that, in turn, modulates development processes. The protein is Serine/threonine-protein kinase WNK8 (WNK8) of Arabidopsis thaliana (Mouse-ear cress).